We begin with the raw amino-acid sequence, 361 residues long: Chalcone synthase A (361 aa).

The active site involves cysteine 168.

It belongs to the thiolase-like superfamily. Chalcone/stilbene synthases family.

It carries out the reaction (E)-4-coumaroyl-CoA + 3 malonyl-CoA + 3 H(+) = 2',4,4',6'-tetrahydroxychalcone + 3 CO2 + 4 CoA. It functions in the pathway secondary metabolite biosynthesis; flavonoid biosynthesis. The primary product of this enzyme is 4,2',4',6'-tetrahydroxychalcone (also termed naringenin-chalcone or chalcone) which can under specific conditions spontaneously isomerize into naringenin. This chain is Chalcone synthase A (CHSA), found in Ipomoea cordatotriloba (Tievine).